A 144-amino-acid polypeptide reads, in one-letter code: Large ribosomal subunit protein uL15 (144 aa).

Residues methionine 1–glycine 53 form a disordered region. Gly residues predominate over residues arginine 21–glycine 31.

Belongs to the universal ribosomal protein uL15 family. Part of the 50S ribosomal subunit.

Functionally, binds to the 23S rRNA. The sequence is that of Large ribosomal subunit protein uL15 from Pectobacterium atrosepticum (strain SCRI 1043 / ATCC BAA-672) (Erwinia carotovora subsp. atroseptica).